We begin with the raw amino-acid sequence, 332 residues long: 2,3-diketo-L-gulonate reductase (332 aa).

Residue H44 is the Proton donor of the active site. NAD(+)-binding positions include 168-174 (ITMVDMS), 224-225 (WK), and 304-306 (GHE).

This sequence belongs to the LDH2/MDH2 oxidoreductase family. DlgD subfamily. In terms of assembly, homodimer.

Its subcellular location is the cytoplasm. The enzyme catalyses 3-dehydro-L-gulonate + NAD(+) = 2,3-dioxo-L-gulonate + NADH + H(+). It catalyses the reaction 3-dehydro-L-gulonate + NADP(+) = 2,3-dioxo-L-gulonate + NADPH + H(+). In terms of biological role, catalyzes the reduction of 2,3-diketo-L-gulonate in the presence of NADH, to form 3-keto-L-gulonate. The polypeptide is 2,3-diketo-L-gulonate reductase (Salmonella agona (strain SL483)).